A 118-amino-acid polypeptide reads, in one-letter code: Large ribosomal subunit protein bL20 (118 aa).

It belongs to the bacterial ribosomal protein bL20 family.

Its function is as follows. Binds directly to 23S ribosomal RNA and is necessary for the in vitro assembly process of the 50S ribosomal subunit. It is not involved in the protein synthesizing functions of that subunit. This Macrococcus caseolyticus (strain JCSC5402) (Macrococcoides caseolyticum) protein is Large ribosomal subunit protein bL20.